The sequence spans 742 residues: Photosystem I P700 chlorophyll a apoprotein A2 2 (742 aa).

The next 8 helical transmembrane spans lie at 46 to 69 (IFAT…FHVA), 135 to 158 (LYQG…LHLQ), 175 to 199 (LNHH…HVAI), 273 to 291 (MAHH…GHMY), 334 to 357 (LHFQ…QHMY), 373 to 399 (AALY…IFWV), 421 to 443 (AIIS…LYVH), and 524 to 542 (FLVH…LICV). The [4Fe-4S] cluster site is built by Cys-566 and Cys-575. 2 consecutive transmembrane segments (helical) span residues 583-604 (SFYL…YWHW) and 651-673 (LSVW…MFLI). 3 residues coordinate chlorophyll a: His-662, Met-670, and Tyr-678. A phylloquinone-binding site is contributed by Trp-679. Residues 715–735 (LVGLAHFTVGYILTYAAFLIA) traverse the membrane as a helical segment.

This sequence belongs to the PsaA/PsaB family. As to quaternary structure, the PsaA/B heterodimer binds the P700 chlorophyll special pair and subsequent electron acceptors. PSI consists of a core antenna complex that captures photons, and an electron transfer chain that converts photonic excitation into a charge separation. The cyanobacterial PSI reaction center is composed of one copy each of PsaA,B,C,D,E,F,I,J,K,L,M and X, and forms trimeric complexes. PSI electron transfer chain: 5 chlorophyll a, 1 chlorophyll a', 2 phylloquinones and 3 4Fe-4S clusters. PSI core antenna: 90 chlorophyll a, 22 carotenoids, 3 phospholipids and 1 galactolipid. P700 is a chlorophyll a/chlorophyll a' dimer, A0 is one or more chlorophyll a, A1 is one or both phylloquinones and FX is a shared 4Fe-4S iron-sulfur center. serves as cofactor.

It localises to the cellular thylakoid membrane. The enzyme catalyses reduced [plastocyanin] + hnu + oxidized [2Fe-2S]-[ferredoxin] = oxidized [plastocyanin] + reduced [2Fe-2S]-[ferredoxin]. Functionally, psaA and PsaB bind P700, the primary electron donor of photosystem I (PSI), as well as the electron acceptors A0, A1 and FX. PSI is a plastocyanin/cytochrome c6-ferredoxin oxidoreductase, converting photonic excitation into a charge separation, which transfers an electron from the donor P700 chlorophyll pair to the spectroscopically characterized acceptors A0, A1, FX, FA and FB in turn. Oxidized P700 is reduced on the lumenal side of the thylakoid membrane by plastocyanin or cytochrome c6. The chain is Photosystem I P700 chlorophyll a apoprotein A2 2 from Trichormus variabilis (strain ATCC 29413 / PCC 7937) (Anabaena variabilis).